A 347-amino-acid chain; its full sequence is Protein RecA (347 aa).

65–72 (GPESSGKT) contacts ATP. The interval 325–347 (KLGISDGDVEETEDAPKSLFDEE) is disordered. The segment covering 338–347 (DAPKSLFDEE) has biased composition (basic and acidic residues).

The protein belongs to the RecA family.

It is found in the cytoplasm. Can catalyze the hydrolysis of ATP in the presence of single-stranded DNA, the ATP-dependent uptake of single-stranded DNA by duplex DNA, and the ATP-dependent hybridization of homologous single-stranded DNAs. It interacts with LexA causing its activation and leading to its autocatalytic cleavage. In Staphylococcus aureus (strain Mu3 / ATCC 700698), this protein is Protein RecA.